The following is a 214-amino-acid chain: Cell division protein SepF (214 aa).

Residues 23–70 (YYDDRAPSRGFPRPRFDDGYGRYDGDDYDDPRREPADCPPPAGYRGGY) are disordered. Over residues 36–58 (PRFDDGYGRYDGDDYDDPRREPA) the composition is skewed to basic and acidic residues.

Belongs to the SepF family. As to quaternary structure, homodimer. Interacts with FtsZ.

Its subcellular location is the cytoplasm. Its function is as follows. Cell division protein that is part of the divisome complex and is recruited early to the Z-ring. Probably stimulates Z-ring formation, perhaps through the cross-linking of FtsZ protofilaments. Its function overlaps with FtsA. The polypeptide is Cell division protein SepF (Mycolicibacterium paratuberculosis (strain ATCC BAA-968 / K-10) (Mycobacterium paratuberculosis)).